The sequence spans 85 residues: U4-theraphotoxin-Hhn1a (85 aa).

Positions 1-22 (MKVTLIAILTCAAVLVLHTTAA) are cleaved as a signal peptide. A propeptide spanning residues 23–48 (EELEAESQLMEVGMPDTELAAVDEER) is cleaved from the precursor. Disulfide bonds link Cys52–Cys66, Cys56–Cys77, and Cys71–Cys82.

It belongs to the neurotoxin 12 (Hwtx-2) family. 02 (Hwtx-2) subfamily. As to quaternary structure, monomer. In terms of tissue distribution, expressed by the venom gland.

Its subcellular location is the secreted. In terms of biological role, neurotoxin active on both insects and mammals. The protein is U4-theraphotoxin-Hhn1a of Cyriopagopus hainanus (Chinese bird spider).